The primary structure comprises 142 residues: MAKKVVALIKLQVKAGQANPAPPVGPALGQRGLNIMEFCKAFNAATSKLEPGLPTPVIITAYSDRTFTFITKSTPASVLLKKAAGVSSGSKRPNTDKVGKVTRKQLEEIVKVKEADLTAAELEAAVRTIAGSARSMGLTVEG.

This sequence belongs to the universal ribosomal protein uL11 family. Part of the ribosomal stalk of the 50S ribosomal subunit. Interacts with L10 and the large rRNA to form the base of the stalk. L10 forms an elongated spine to which L12 dimers bind in a sequential fashion forming a multimeric L10(L12)X complex. In terms of processing, one or more lysine residues are methylated.

Functionally, forms part of the ribosomal stalk which helps the ribosome interact with GTP-bound translation factors. The sequence is that of Large ribosomal subunit protein uL11 from Xanthomonas campestris pv. campestris (strain 8004).